We begin with the raw amino-acid sequence, 3326 residues long: Protein unc-80 homolog (3326 aa).

Positions 152–164 are enriched in polar residues; that stretch reads IENQGSPGQPCRS. 4 disordered regions span residues 152–178, 243–267, 283–317, and 450–469; these read IENQGSPGQPCRSSSHDEEENNRRKTF, KRSSPINSQSQTCESPNQDTRQQGE, PKATISGCHQGNSFDGSLSSQTSQERGPSHSRASL, and RKEDRERKGSIPFHHTGKRR. Ser-257 carries the phosphoserine modification. The segment covering 283-308 has biased composition (polar residues); the sequence is PKATISGCHQGNSFDGSLSSQTSQER. Phosphoserine is present on Ser-526. Disordered regions lie at residues 536 to 560, 697 to 785, 967 to 1076, 1405 to 1430, and 1469 to 1516; these read LSARHSHSHHTLVSDLPDHSNSHGE, RKKS…DNIP, GKKV…SRRI, EDSKDSLHSSSHTIKSDAGAEEKKVP, and SSKL…LSNA. Basic and acidic residues-rich tracts occupy residues 551–560 and 699–713; these read LPDHSNSHGE and KSENKENESVEKRPS. Residues 723 to 737 show a composition bias toward low complexity; that stretch reads SSSSTSGFGAPSASG. Residues 738–770 show a composition bias toward gly residues; that stretch reads AGDGGGEEGGGGDGGGGGGGGDGGGGGGGGGGP. Over residues 772–783 the composition is skewed to basic and acidic residues; that stretch reads EKNEKNQEKDDN. Low complexity predominate over residues 1038-1055; that stretch reads SQSAASDTSSQSEQDTSE. The span at 1418–1429 shows a compositional bias: basic and acidic residues; sequence IKSDAGAEEKKV. A run of 2 helical transmembrane segments spans residues 2336-2356 and 2466-2486; these read PFVLQLFASVAPLLEFPDAAN and IAATAALATSLQALLYSVEVL. The tract at residues 2493 to 2515 is disordered; the sequence is PQMSRSDQGHKGTTTANHTMSSG. 2 helical membrane-spanning segments follow: residues 2853 to 2873 and 2899 to 2919; these read GLAESTSQAAYLALKVILVCF and LALWDFLDFIVRTRIPIFVLL. Over residues 3010-3032 the composition is skewed to polar residues; it reads NTGTGTVWEQDSEPSQQASQDTL. The interval 3010-3052 is disordered; sequence NTGTGTVWEQDSEPSQQASQDTLSRTDEEDEENDSVSMPSVVS. At Ser-3110 the chain carries Phosphoserine. 3 disordered regions span residues 3122-3222, 3236-3271, and 3296-3326; these read LQQP…VLTS, PKQSEPLLAEEGEKKEDEEIQGATAHCPLSTQLSDP, and NGTENPLLSSQFTFTPPELGDTDSALDESHV. The span at 3127–3136 shows a compositional bias: basic residues; that stretch reads GRKRGLRQLR. Residues 3157 to 3168 show a composition bias toward polar residues; it reads LSTTRRSIQPKT. Positions 3298–3309 are enriched in polar residues; it reads TENPLLSSQFTF. A compositionally biased stretch (acidic residues) spans 3315 to 3326; that stretch reads GDTDSALDESHV.

Belongs to the unc-80 family. As to quaternary structure, NALCN complex consists of NALCN and auxiliary subunits, UNC79, UNC80 and NACL1. These auxiliary subunits are essential for the NALCN complex function. Interacts (via N-terminus half) with NALCN; this interaction facilitates NALCN surface localization. Interacts (via C-terminus) with UNC79. UNC80 bridges NALCN to UNC79. Phosphorylated on tyrosine residues. Expressed almost exclusively in the brain. Expressed in hippocampus and ventral tegmental area neurons.

The protein resides in the cell membrane. It localises to the cell projection. It is found in the dendrite. Functionally, auxiliary subunit of the NALCN sodium channel complex. The NALCN sodium channel complex is a voltage-gated ion channel responsible for the resting Na(+) permeability that controls neuronal excitability. This complex is activated by neuropeptides substance P, neurotensin. In addition, the channel is inhibited by extracellular Ca(2+) through the Ca(2+)-sensing receptor. UNC80 is essential for NALCN sensitivity to extracellular calcium. The polypeptide is Protein unc-80 homolog (Unc80) (Mus musculus (Mouse)).